The sequence spans 1060 residues: MPKRQDIHKILVIGSGPIIIGQAAEFDYSGTQACLALREEGYEVVLVNSNPATIMTDTEIADRVYIEPLTVEFVSQILRKELPDAILPTIGGQIGLNLAMKLSNTGILDELGIELLGTKLTAIDQAEDRELFKNLMQKLHEPVPESAIANNIEEAQQFADKIGFPVIIRPAFTMGGTGGGIANNEKELAEIAENGLNLSPVTQVLVERSIAGYKEVEFEVMRDAADSAIVVCNMENFDPVGVHTGDSMVFAPTQTLTDKEVQMLRDAALKIIRALKIEGGCNVQFALDRNSFKYYVIEVNPRVSRSSALASKATGYPIAKMAAKIAVGLHLDEIKNPVTKKTWAEFEPALDYVVTKLPRFPFDKFENGDRTLGTQMKATGEVMAIGRTLEESLLKAVRSLEVGLIHPERPAFAKLSDDELSKQIIQANDERLFYLAEAFRRDYTIEEVAELSKMNPFFLDKIKHIVELERELAAHKADLGLLAEVKRYGFADEEIAKLWGLHADQVRQMRKEQKILPVYKMVDTCAGEFASDTPYYYSTYESSTESVKSDKPSVLVIGSGPIRIGQGVEFDYATVHSVKAIQKAGYEAIIMNSNPETVSTDFSIADKLYFEPLTLEDVLNVIDLEQPEGVIVQFGGQTAINLAEPLANRGIKILGTSVEDLNRAEDRDLFDQVIKSLKLPQPEGGTATDKAGALAVADKIGYPVLVRPSYVLGGRAMEIVHDATELDNYIDRAVSVSHDHPVLIDHYLVGKECEVDCISDGDTVVLPGIMEHIERAGIHSGDSMAVYPPQTFSQDIIDQITDATIKLSRTLNCIGLMNVQFIIHDGKAYVIEVNPRASRTVPFLSKVTNIKLAQVATLAILGLSLKEQGFETGLLPNQSGIHVKSPVFSFSKLNHVDSLLGPEMKSTGEVMGSDTTLAKALYKAFEAAGMHLPQFGRALITVKDADKAEATALAKRFREVGYQLVATSGTAKAFEKAGITVSTIEKLDSGQETILEDIANRKIQLVINTMSADKKVSSDGFRIREAAIEHGVPLMTSLDTAGAILKVLELQAFSISPIKS.

The segment at 1–401 is carboxyphosphate synthetic domain; that stretch reads MPKRQDIHKI…SLLKAVRSLE (401 aa). 12 residues coordinate ATP: R129, R169, G175, G176, R208, I210, E215, G241, V242, H243, Q284, and E298. Positions 133-327 constitute an ATP-grasp 1 domain; sequence KNLMQKLHEP…IAKMAAKIAV (195 aa). Mg(2+) contacts are provided by Q284, E298, and N300. Q284, E298, and N300 together coordinate Mn(2+). Residues 402–546 are oligomerization domain; it reads VGLIHPERPA…YSTYESSTES (145 aa). A carbamoyl phosphate synthetic domain region spans residues 547–929; it reads VKSDKPSVLV…ALYKAFEAAG (383 aa). An ATP-grasp 2 domain is found at 671 to 861; sequence DQVIKSLKLP…LAQVATLAIL (191 aa). R707, H746, L748, E752, G777, I778, H779, S780, Q820, and E832 together coordinate ATP. Mg(2+) contacts are provided by Q820, E832, and N834. Positions 820, 832, and 834 each coordinate Mn(2+). Positions 930 to 1060 constitute an MGS-like domain; it reads MHLPQFGRAL…QAFSISPIKS (131 aa). The segment at 930-1060 is allosteric domain; the sequence is MHLPQFGRAL…QAFSISPIKS (131 aa).

It belongs to the CarB family. Composed of two chains; the small (or glutamine) chain promotes the hydrolysis of glutamine to ammonia, which is used by the large (or ammonia) chain to synthesize carbamoyl phosphate. Tetramer of heterodimers (alpha,beta)4. The cofactor is Mg(2+). Requires Mn(2+) as cofactor.

It catalyses the reaction hydrogencarbonate + L-glutamine + 2 ATP + H2O = carbamoyl phosphate + L-glutamate + 2 ADP + phosphate + 2 H(+). The catalysed reaction is hydrogencarbonate + NH4(+) + 2 ATP = carbamoyl phosphate + 2 ADP + phosphate + 2 H(+). It functions in the pathway amino-acid biosynthesis; L-arginine biosynthesis; carbamoyl phosphate from bicarbonate: step 1/1. It participates in pyrimidine metabolism; UMP biosynthesis via de novo pathway; (S)-dihydroorotate from bicarbonate: step 1/3. In terms of biological role, large subunit of the glutamine-dependent carbamoyl phosphate synthetase (CPSase). CPSase catalyzes the formation of carbamoyl phosphate from the ammonia moiety of glutamine, carbonate, and phosphate donated by ATP, constituting the first step of 2 biosynthetic pathways, one leading to arginine and/or urea and the other to pyrimidine nucleotides. The large subunit (synthetase) binds the substrates ammonia (free or transferred from glutamine from the small subunit), hydrogencarbonate and ATP and carries out an ATP-coupled ligase reaction, activating hydrogencarbonate by forming carboxy phosphate which reacts with ammonia to form carbamoyl phosphate. The polypeptide is Carbamoyl phosphate synthase large chain (Lacticaseibacillus casei (strain BL23) (Lactobacillus casei)).